The following is a 323-amino-acid chain: Homocysteine S-methyltransferase 1 (323 aa).

Positions valine 3–leucine 317 constitute a Hcy-binding domain. Cysteine 235, cysteine 302, and cysteine 303 together coordinate Zn(2+).

In terms of assembly, monomer. The cofactor is Zn(2+).

It carries out the reaction S-methyl-L-methionine + L-homocysteine = 2 L-methionine + H(+). Functionally, catalyzes methyl transfer from S-methylmethionine (SMM) to adenosyl-L-homocysteine (AdoMet). SMM degradation (by HMT-1, HMT-2, HMT-3 and HMT-4) and biosynthesis (by MMT1) constitute the SMM cycle in plants, which is probably required to achieve short term control of AdoMet level. The chain is Homocysteine S-methyltransferase 1 (HMT-1) from Zea mays (Maize).